The sequence spans 136 residues: ATP synthase epsilon chain (136 aa).

Belongs to the ATPase epsilon chain family. F-type ATPases have 2 components, CF(1) - the catalytic core - and CF(0) - the membrane proton channel. CF(1) has five subunits: alpha(3), beta(3), gamma(1), delta(1), epsilon(1). CF(0) has three main subunits: a, b and c.

Its subcellular location is the cellular thylakoid membrane. Produces ATP from ADP in the presence of a proton gradient across the membrane. The sequence is that of ATP synthase epsilon chain (atpC) from Prochloron didemni.